Reading from the N-terminus, the 635-residue chain is MNINTLIINFNKVKRMKNFLILTLLVVMVVVFLQGPTLMINNSGQGMGHNVEKIKLEPHVKIQRENLERKKIPPKQDFTDGLHASFTTIPFYYKANGIINQNTNKLYRNYQITIVTQTTVDRLSKVSMMAEKWKAPLSVAVFIKDSENPKAEIEKLEKHIENDYPALSYYSDIHILISNKTRYPVNNLRNLAIEHSRTDLVFIMDADFLPPLGLHDYILSQKYYFNIKPSNQHYFKNNLLNFYHKKPLNNNDNNNDYNNNPSKIPYDQIIDYSTNINTDSEFNNINYNMENLNENEYLKNINNNNNNNDNNYNNNNNNNNNNNNNNNNNNNNNNNNNNNNNNNNNNNNNNNNNNNNIDNNIDNKIDNIDNNIDNNNNIDNINNNNNINNIDNNNSNYNDNNNNNNNNNNNNNNNNNNNNNNNNNNNNNNNNNNNNNNNNNNNNNNNNNNNNNNNNNEPLKVAFVIPSFSSHIPPSQHPNNKMDMIDLVKSSKIEPSNSRVCKKCHSPTNFEKWMDAVEPYEVEYKWIFEPYLVFNKTQNIPFDERLKGYGFDKNSHAFSMAVEGFHFVVLPDSFIIHVNHSPSTWEGPSLDEQQWDALRVVCEIIPDVKIKNGYNPNVVLFNEPLPNECFSDHHW.

Topologically, residues 1–18 are cytoplasmic; sequence MNINTLIINFNKVKRMKN. A helical; Signal-anchor for type II membrane protein membrane pass occupies residues 19-38; sequence FLILTLLVVMVVVFLQGPTL. Residues 39–635 are Extracellular-facing; it reads MINNSGQGMG…PNECFSDHHW (597 aa). 2 N-linked (GlcNAc...) asparagine glycosylation sites follow: asparagine 41 and asparagine 179. Disordered regions lie at residues 300 to 358 and 389 to 458; these read NINN…NNID and NIDN…NNEP. Positions 389-456 are enriched in low complexity; it reads NIDNNNSNYN…NNNNNNNNNN (68 aa). 2 N-linked (GlcNAc...) asparagine glycosylation sites follow: asparagine 393 and asparagine 535.

It belongs to the glycosyltransferase 8 family. Highly divergent.

The protein localises to the membrane. The chain is Glycosyltransferase-like protein gnt13 (gnt13) from Dictyostelium discoideum (Social amoeba).